Reading from the N-terminus, the 449-residue chain is PGL/p-HBAD biosynthesis rhamnosyltransferase (449 aa).

This sequence belongs to the glycosyltransferase 28 family.

Its function is as follows. Catalyzes the transfer of the first rhamnosyl residue on p-hydroxybenzoic acid or phenolphthiocerol derivatives to form, after O-methylation at position 2 of the sugar unit, mono-O-methyl-glycosyl-p-hydroxybenzoic acid derivative (p-HBAD I) and 2-O-methyl-rhamnosyl-phenolphthiocerol dimycocerosate (also called mycoside B) during p-hydroxybenzoic acid derivatives (p-HBAD) and glycosylated phenolphthiocerol dimycocerosates (PGL) biosynthesis. The sequence is that of PGL/p-HBAD biosynthesis rhamnosyltransferase from Mycobacterium bovis (strain BCG / Pasteur 1173P2).